We begin with the raw amino-acid sequence, 436 residues long: Repulsive guidance molecule B (436 aa).

An N-terminal signal peptide occupies residues 1–48 (MGVRAAPSCAAAPAAAGAEQSRRPGLWPPSPPPPLLLLLLLSLGLLHA). Asn-123 carries N-linked (GlcNAc...) asparagine glycosylation. 2 disulfides stabilise this stretch: Cys-142–Cys-229 and Cys-166–Cys-315. Asn-386 is a glycosylation site (N-linked (GlcNAc...) asparagine). Cys-415 carries GPI-anchor amidated cysteine lipidation. Residues 416–436 (GGCRDLPVGLGLTCLILIMFL) constitute a propeptide, removed in mature form.

Belongs to the repulsive guidance molecule (RGM) family. Homooligomer. Interacts with DRGX. Interacts with BMP2 and BMP4. Interacts with the BMP type I receptors ACVR1, BMPR1A and BMPR1B and with the BMP type II receptor ACVR2B. The functional complex with its receptor NEO1/neogenin appears to be a heterotetramer with a 2:2 stoichiometry, RGM molecules acting as staples that bring two NEO1 receptors together without interacting themselves, this arrangement leads to activation of downstream signaling via RhoA. Post-translationally, GPI-anchored. Autocatalytically cleaved at low pH; the two chains remain linked via two disulfide bonds. In terms of tissue distribution, detected in neonatal and adult dorsal root ganglion sensory neurons, spinal cord, and brain (at protein level). Also expressed at high levels in retinal ganglion cells of developing mouse, extending to the optic nerve (at protein level). Expressed in testis, epididymis, ovary, uterus, and pituitary.

Its subcellular location is the cell membrane. The protein resides in the membrane raft. Functionally, member of the repulsive guidance molecule (RGM) family that contributes to the patterning of the developing nervous system. Acts as a bone morphogenetic protein (BMP) coreceptor that potentiates BMP signaling. Promotes neuronal adhesion. May inhibit neurite outgrowth. The sequence is that of Repulsive guidance molecule B from Mus musculus (Mouse).